The chain runs to 1041 residues: Beta-galactosidase (1041 aa).

Asn103 and Asp201 together coordinate substrate. Asp201 provides a ligand contact to Na(+). Glu415, His417, and Glu460 together coordinate Mg(2+). Residues Glu460 and 536-539 contribute to the substrate site; that span reads EYAH. The active-site Proton donor is Glu460. Glu536 functions as the Nucleophile in the catalytic mechanism. A Mg(2+)-binding site is contributed by Asn596. Na(+)-binding residues include Phe600 and Asn603. Residues Asn603 and Trp1016 each contribute to the substrate site.

The protein belongs to the glycosyl hydrolase 2 family. As to quaternary structure, homotetramer. Mg(2+) serves as cofactor. The cofactor is Na(+).

It catalyses the reaction Hydrolysis of terminal non-reducing beta-D-galactose residues in beta-D-galactosides.. This chain is Beta-galactosidase, found in Alteromonas mediterranea (strain DSM 17117 / CIP 110805 / LMG 28347 / Deep ecotype).